The primary structure comprises 1165 residues: ATP-dependent helicase/deoxyribonuclease subunit B (1165 aa).

The UvrD-like helicase ATP-binding domain maps to 1-298; it reads MALRFILGRA…AHLEREFFRR (298 aa). 8–15 lines the ATP pocket; the sequence is GRAGTGKT. In terms of domain architecture, UvrD-like helicase C-terminal spans 279–584; the sequence is PARFRANPAL…QLALIPPALD (306 aa). Residues cysteine 800, cysteine 1119, cysteine 1122, and cysteine 1128 each contribute to the [4Fe-4S] cluster site.

This sequence belongs to the helicase family. AddB/RexB type 1 subfamily. As to quaternary structure, heterodimer of AddA and AddB. The cofactor is Mg(2+). Requires [4Fe-4S] cluster as cofactor.

Functionally, the heterodimer acts as both an ATP-dependent DNA helicase and an ATP-dependent, dual-direction single-stranded exonuclease. Recognizes the chi site generating a DNA molecule suitable for the initiation of homologous recombination. The AddB subunit has 5' -&gt; 3' nuclease activity but not helicase activity. The chain is ATP-dependent helicase/deoxyribonuclease subunit B from Desulforudis audaxviator (strain MP104C).